Consider the following 1357-residue polypeptide: RNA2 polyprotein (1357 aa).

It belongs to the nepoviruses RNA2 polyprotein family. Specific enzymatic cleavages in vivo by the P1 encoded 3C-like protease yield mature proteins.

The protein localises to the host cell junction. The protein resides in the host plasmodesma. Its subcellular location is the host cytoplasm. It is found in the host nucleus. It localises to the virion. Functionally, implicated in RNA2 replication. Could also be required for nematode transmission of the virus. Transports viral genome to neighboring plant cells directly through plasmosdesmata, without any budding. The movement protein allows efficient cell to cell propagation, by bypassing the host cell wall barrier. Acts by forming a tubular structure at the host plasmodesmata, enlarging it enough to allow free passage of virion capsids. The sequence is that of RNA2 polyprotein from Beet ringspot virus (BRSV).